Consider the following 131-residue polypeptide: MLIGVGTDIVQIPRIEKILHLYPELFAKKILTSKELKQFALLGKINHAAFLAKRFAAKEAVSKAFGVGIGQGINFKDITILNNDLGKPIVEVSSNYTNKLSPFNIHLSLADDYPVCVAFAVIESSYNVIRG.

Asp8 and Glu59 together coordinate Mg(2+).

It belongs to the P-Pant transferase superfamily. AcpS family. The cofactor is Mg(2+).

The protein resides in the cytoplasm. It carries out the reaction apo-[ACP] + CoA = holo-[ACP] + adenosine 3',5'-bisphosphate + H(+). Its function is as follows. Transfers the 4'-phosphopantetheine moiety from coenzyme A to a Ser of acyl-carrier-protein. In Rickettsia rickettsii (strain Iowa), this protein is Holo-[acyl-carrier-protein] synthase.